A 917-amino-acid polypeptide reads, in one-letter code: Envelope glycoprotein B (917 aa).

An N-terminal signal peptide occupies residues 1-22; sequence MAISRRSLHAIILTVLLLAATA. The span at 21–30 shows a compositional bias: low complexity; that stretch reads TAAPSQSGSR. The tract at residues 21 to 117 is disordered; sequence TAAPSQSGSR…SGNASEPADP (97 aa). At 23-792 the chain is on the virion surface side; the sequence is APSQSGSRSR…SGVSSFLSNP (770 aa). The span at 38–49 shows a compositional bias: basic and acidic residues; that stretch reads ERQSTNRGRDNN. Asparagine 48, asparagine 110, and asparagine 164 each carry an N-linked (GlcNAc...) asparagine; by host glycan. 5 cysteine pairs are disulfide-bonded: cysteine 139–cysteine 591, cysteine 156–cysteine 547, cysteine 230–cysteine 294, cysteine 387–cysteine 435, and cysteine 614–cysteine 651. 2 involved in fusion and/or binding to host membrane regions span residues 196 to 202 and 281 to 288; these read VWSGYSY and GSAWIHRH. N-linked (GlcNAc...) asparagine; by host glycans are attached at residues asparagine 421, asparagine 453, and asparagine 505. Asparagine 692 carries N-linked (GlcNAc...) asparagine; by host glycosylation. The hydrophobic membrane proximal region stretch occupies residues 737–790; sequence IDTVIKADPNAAIFAGLHGFFEGLGDVGRAVGRVVLGVVGGVVATVSGVSSFLS. Residues 793–813 traverse the membrane as a helical segment; that stretch reads FGALAIGLLVLGGLVAAFFAF. Topologically, residues 814 to 917 are intravirion; that stretch reads RYVMRLQRNP…EALPETDEDI (104 aa). The Golgi targeting motif lies at 865-868; it reads YMAL. The Internalization motif motif lies at 907–910; sequence YEAL.

The protein belongs to the herpesviridae glycoprotein B family. Homotrimer; disulfide-linked. Binds to heparan sulfate proteoglycans. Interacts with gH/gL heterodimer. A proteolytic cleavage by host furin generates two subunits that remain linked by disulfide bonds.

It localises to the virion membrane. The protein resides in the host cell membrane. It is found in the host endosome membrane. Its subcellular location is the host Golgi apparatus membrane. Functionally, envelope glycoprotein that forms spikes at the surface of virion envelope. Essential for the initial attachment to heparan sulfate moieties of the host cell surface proteoglycans. Involved in fusion of viral and cellular membranes leading to virus entry into the host cell. Following initial binding to its host receptors, membrane fusion is mediated by the fusion machinery composed at least of gB and the heterodimer gH/gL. May be involved in the fusion between the virion envelope and the outer nuclear membrane during virion egress. In Bovine herpesvirus 2 (strain BMV) (BoHV-2), this protein is Envelope glycoprotein B.